A 321-amino-acid chain; its full sequence is Glucokinase (321 aa).

8 to 13 (GDVGGT) lines the ATP pocket.

It belongs to the bacterial glucokinase family.

It is found in the cytoplasm. The enzyme catalyses D-glucose + ATP = D-glucose 6-phosphate + ADP + H(+). This Salmonella agona (strain SL483) protein is Glucokinase.